The primary structure comprises 53 residues: UPF0391 membrane protein KPK_4780 (53 aa).

2 consecutive transmembrane segments (helical) span residues 4–24 (WGII…GGLA) and 30–47 (AAKI…VSLF).

It belongs to the UPF0391 family.

It is found in the cell membrane. This chain is UPF0391 membrane protein KPK_4780, found in Klebsiella pneumoniae (strain 342).